The sequence spans 807 residues: Phenylalanine--tRNA ligase beta subunit (807 aa).

In terms of domain architecture, tRNA-binding spans 39 to 156 (AGEFSGVVIG…SDAPLGQCVR (118 aa)). Positions 409–488 (PQTKDVNLRR…RIFGYNNIPN (80 aa)) constitute a B5 domain. Asp466, Asp472, Glu475, and Glu476 together coordinate Mg(2+). One can recognise an FDX-ACB domain in the interval 713–806 (SRFPANRRDL…LKTELNASLR (94 aa)).

This sequence belongs to the phenylalanyl-tRNA synthetase beta subunit family. Type 1 subfamily. As to quaternary structure, tetramer of two alpha and two beta subunits. It depends on Mg(2+) as a cofactor.

It is found in the cytoplasm. It catalyses the reaction tRNA(Phe) + L-phenylalanine + ATP = L-phenylalanyl-tRNA(Phe) + AMP + diphosphate + H(+). The sequence is that of Phenylalanine--tRNA ligase beta subunit from Colwellia psychrerythraea (strain 34H / ATCC BAA-681) (Vibrio psychroerythus).